We begin with the raw amino-acid sequence, 105 residues long: Met repressor (105 aa).

The protein belongs to the MetJ family. As to quaternary structure, homodimer.

It is found in the cytoplasm. In terms of biological role, this regulatory protein, when combined with SAM (S-adenosylmethionine) represses the expression of the methionine regulon and of enzymes involved in SAM synthesis. This chain is Met repressor, found in Salmonella dublin (strain CT_02021853).